Reading from the N-terminus, the 506-residue chain is Sodium-coupled neutral amino acid symporter 2 (506 aa).

A disordered region spans residues Met1–Asn23. The Cytoplasmic portion of the chain corresponds to Met1–Ser76. The segment at Met1–Met96 is regulates protein turnover upon amino acid deprivation. Residues Ser12, Ser21, Ser22, and Ser55 each carry the phosphoserine modification. Residues Val77–Met96 traverse the membrane as a helical segment. Position 82 (Asn82) interacts with Na(+). Over Ala97–Ala102 the chain is Extracellular. A helical membrane pass occupies residues Leu103 to Leu123. The Cytoplasmic portion of the chain corresponds to Lys124–Asn158. A helical transmembrane segment spans residues Ile159–Ile177. The Extracellular segment spans residues Gln178–Gly188. A helical membrane pass occupies residues Leu189–Leu209. Residues Ser210–Tyr217 are Cytoplasmic-facing. The chain crosses the membrane as a helical span at residues Leu218–Phe238. Topologically, residues Lys239–Thr292 are extracellular. Cys245 and Cys281 are oxidised to a cystine. Residues Asn258 and Asn274 are each glycosylated (N-linked (GlcNAc...) asparagine). Residues Val293–Tyr313 traverse the membrane as a helical segment. Topologically, residues Glu314–Lys329 are cytoplasmic. A helical transmembrane segment spans residues Ile330–Phe350. The Extracellular segment spans residues Tyr351 to Leu371. A helical transmembrane segment spans residues Leu372 to Phe392. Thr386 contributes to the Na(+) binding site. The Cytoplasmic portion of the chain corresponds to Pro393–His413. Residues Ser414–Ile434 traverse the membrane as a helical segment. Residues Arg435–Asp436 lie on the Extracellular side of the membrane. The helical transmembrane segment at Ile437–Phe457 threads the bilayer. Over Tyr458–Lys472 the chain is Cytoplasmic. Residues Ile473–Leu495 form a helical membrane-spanning segment. Over Asp496–His506 the chain is Extracellular.

The protein belongs to the amino acid/polyamine transporter 2 family. In terms of processing, polyubiquitination by NEDD4L regulates the degradation and the activity of SLC38A2.

It is found in the cell membrane. It carries out the reaction L-alanine(in) + Na(+)(in) = L-alanine(out) + Na(+)(out). It catalyses the reaction glycine(in) + Na(+)(in) = glycine(out) + Na(+)(out). The enzyme catalyses L-serine(in) + Na(+)(in) = L-serine(out) + Na(+)(out). The catalysed reaction is L-proline(in) + Na(+)(in) = L-proline(out) + Na(+)(out). It carries out the reaction L-methionine(in) + Na(+)(in) = L-methionine(out) + Na(+)(out). It catalyses the reaction L-histidine(in) + Na(+)(in) = L-histidine(out) + Na(+)(out). The enzyme catalyses L-asparagine(in) + Na(+)(in) = L-asparagine(out) + Na(+)(out). The catalysed reaction is L-glutamine(in) + Na(+)(in) = L-glutamine(out) + Na(+)(out). It carries out the reaction L-threonine(in) + Na(+)(in) = L-threonine(out) + Na(+)(out). It catalyses the reaction L-leucine(in) + Na(+)(in) = L-leucine(out) + Na(+)(out). The enzyme catalyses L-phenylalanine(in) + Na(+)(in) = L-phenylalanine(out) + Na(+)(out). With respect to regulation, inhibited by N-methyl-D-glucamine. Inhibited by choline. Allosteric regulation of sodium ions binding by pH. In terms of biological role, symporter that cotransports neutral amino acids and sodium ions from the extracellular to the intracellular side of the cell membrane. The transport is pH-sensitive, Li(+)-intolerant, electrogenic, driven by the Na(+) electrochemical gradient and cotransports of neutral amino acids and sodium ions with a stoichiometry of 1:1. May function in the transport of amino acids at the blood-brain barrier. May function in the transport of amino acids in the supply of maternal nutrients to the fetus through the placenta. Maintains a key metabolic glutamine/glutamate balance underpinning retrograde signaling by dendritic release of the neurotransmitter glutamate. Transports L-proline in differentiating osteoblasts for the efficient synthesis of proline-enriched proteins and provides proline essential for osteoblast differentiation and bone formation during bone development. This chain is Sodium-coupled neutral amino acid symporter 2, found in Bos taurus (Bovine).